The primary structure comprises 400 residues: Putative transposase for insertion sequence element IS5376 (400 aa).

An HTH IS21-type domain is found at 5–67; it reads GEFFMIKEMY…PFKPYLQKRM (63 aa). The H-T-H motif DNA-binding region spans 20-39; that stretch reads ISDIARELGIDRKTVRKYIH. The tract at residues 35 to 55 is disordered; that stretch reads RKYIHSPNPPSKSKRKQRKSK. An Integrase catalytic domain is found at 113 to 287; the sequence is YETLPGEQMQ…SPQERWAEES (175 aa).

The protein belongs to the transposase IS21/IS408/IS1162 family.

In terms of biological role, involved in the transposition of the insertion sequence. The protein is Putative transposase for insertion sequence element IS5376 of Geobacillus stearothermophilus (Bacillus stearothermophilus).